A 250-amino-acid polypeptide reads, in one-letter code: MSAAAAPAPERGWKSEKVDEAQALARSCAARRPDFQPCDGLSICATHSHGKCFKLHWCCHLGWCHCKYVYQPMTPVEQLPSTEIPAKPREPANTIQISVSLTEHFLKFASVFQPPLPPDSPRYCMISDLFIDNYQVKCINGKMCYVQKQPAPHSHKMSPEEVSAHDAFISKESNTPKIDHCSSPSSSEDSGINAIGAHYVESCDEDTEEGAELSSEEDYSPESSWEPDECTLLSPSQSDLEVIETIETTV.

A disordered region spans residues E201–V250. Positions S202–E229 are enriched in acidic residues.

This sequence belongs to the UPF0524 family.

In terms of biological role, may play a role in neuronal and neurobehavioral development. This is UPF0524 protein C3orf70 homolog from Bos taurus (Bovine).